The sequence spans 565 residues: Probable serine/threonine-protein kinase abkA (565 aa).

Positions 44 to 77 (NNNNISLKDKFKDLKDLKDNLNEKKINNDNDDDD) form a coiled coil. A Protein kinase domain is found at 231 to 565 (LFQDDPIAAA…FKNIFYKNYK (335 aa)). ATP contacts are provided by residues 237–245 (IAAASIGQV) and Lys-259. Catalysis depends on Asp-401, which acts as the Proton acceptor.

It belongs to the protein kinase superfamily. ADCK protein kinase family.

This Dictyostelium discoideum (Social amoeba) protein is Probable serine/threonine-protein kinase abkA (abkA).